A 526-amino-acid polypeptide reads, in one-letter code: Exodeoxyribonuclease 7 large subunit (526 aa).

The segment at 497-526 (AMTTEGGTPPAGAKKRSTKPAEPPKQGSLF) is disordered.

This sequence belongs to the XseA family. In terms of assembly, heterooligomer composed of large and small subunits.

It is found in the cytoplasm. It carries out the reaction Exonucleolytic cleavage in either 5'- to 3'- or 3'- to 5'-direction to yield nucleoside 5'-phosphates.. Bidirectionally degrades single-stranded DNA into large acid-insoluble oligonucleotides, which are then degraded further into small acid-soluble oligonucleotides. This is Exodeoxyribonuclease 7 large subunit from Rhizobium johnstonii (strain DSM 114642 / LMG 32736 / 3841) (Rhizobium leguminosarum bv. viciae).